Here is a 225-residue protein sequence, read N- to C-terminus: Protein-L-isoaspartate O-methyltransferase (225 aa).

S-adenosyl-L-homocysteine-binding positions include 57–60 (ATVS), histidine 65, serine 89, 110–111 (EH), 142–143 (DG), threonine 216, and glutamine 221. Serine 60 is a catalytic residue.

It belongs to the methyltransferase superfamily. L-isoaspartyl/D-aspartyl protein methyltransferase family. As to quaternary structure, monomer.

The protein localises to the cytoplasm. The protein resides in the cytosol. It carries out the reaction [protein]-L-isoaspartate + S-adenosyl-L-methionine = [protein]-L-isoaspartate alpha-methyl ester + S-adenosyl-L-homocysteine. In terms of biological role, initiates the repair of damaged proteins by catalyzing methyl esterification of L-isoaspartyl and D-aspartyl residues produced by spontaneous isomerization and racemization of L-aspartyl and L-asparaginyl residues in aging peptides and proteins. The sequence is that of Protein-L-isoaspartate O-methyltransferase (pcm-1) from Caenorhabditis elegans.